Consider the following 299-residue polypeptide: uncharacterized protein (299 aa).

This sequence belongs to the glycosyltransferase 2 family.

This is an uncharacterized protein from Mycoplasma pneumoniae (strain ATCC 29342 / M129 / Subtype 1) (Mycoplasmoides pneumoniae).